A 313-amino-acid polypeptide reads, in one-letter code: D-alanine--D-alanine ligase (313 aa).

Positions 108-308 constitute an ATP-grasp domain; the sequence is KLVWQQLGIP…YQELVVGVLA (201 aa). 138–193 contacts ATP; the sequence is VAKLGLPLFVKPASEGSSVAVIKVKSADALPAALIEAVKYDKIVVVEKSVEGGGEY. Mg(2+) is bound by residues Asp-262, Glu-275, and Asn-277.

It belongs to the D-alanine--D-alanine ligase family. It depends on Mg(2+) as a cofactor. The cofactor is Mn(2+).

It is found in the cytoplasm. It catalyses the reaction 2 D-alanine + ATP = D-alanyl-D-alanine + ADP + phosphate + H(+). Its pathway is cell wall biogenesis; peptidoglycan biosynthesis. Its function is as follows. Cell wall formation. The chain is D-alanine--D-alanine ligase from Paraburkholderia phytofirmans (strain DSM 17436 / LMG 22146 / PsJN) (Burkholderia phytofirmans).